We begin with the raw amino-acid sequence, 246 residues long: Probable transcriptional regulatory protein CA_C2295 (246 aa).

This sequence belongs to the TACO1 family.

The protein localises to the cytoplasm. This Clostridium acetobutylicum (strain ATCC 824 / DSM 792 / JCM 1419 / IAM 19013 / LMG 5710 / NBRC 13948 / NRRL B-527 / VKM B-1787 / 2291 / W) protein is Probable transcriptional regulatory protein CA_C2295.